We begin with the raw amino-acid sequence, 745 residues long: Inhibitor of nuclear factor kappa-B kinase subunit alpha (745 aa).

The Protein kinase domain occupies 15–302 (WEMRERLGTG…LTLKQPRCFV (288 aa)). ATP-binding positions include 21-29 (LGTGGFGNV) and lysine 44. Position 23 is a phosphothreonine; by PKB/AKT1 and SGK1 (threonine 23). Catalysis depends on aspartate 144, which acts as the Proton acceptor. Phosphoserine; by MAP3K14 is present on serine 176. Residue threonine 179 is modified to (Microbial infection) O-acetylthreonine; by Yersinia YopJ. The residue at position 180 (serine 180) is a Phosphoserine; by SGK1. The tract at residues 455–476 (LLRYNANLTKMKNTLISASQQL) is leucine-zipper. An NEMO-binding region spans residues 738–743 (LDWSWL).

The protein belongs to the protein kinase superfamily. Ser/Thr protein kinase family. I-kappa-B kinase subfamily. As to quaternary structure, component of the I-kappa-B-kinase (IKK) core complex consisting of CHUK, IKBKB and IKBKG; probably four alpha/CHUK-beta/IKBKB dimers are associated with four gamma/IKBKG subunits. The IKK core complex seems to associate with regulatory or adapter proteins to form a IKK-signalosome holo-complex. The IKK complex associates with TERF2IP/RAP1, leading to promote IKK-mediated phosphorylation of RELA/p65. Part of a complex composed of NCOA2, NCOA3, CHUK/IKKA, IKBKB, IKBKG and CREBBP. Part of a 70-90 kDa complex at least consisting of CHUK/IKKA, IKBKB, NFKBIA, RELA, ELP1 and MAP3K14. Directly interacts with TRPC4AP. May interact with TRAF2. Interacts with NALP2. May interact with MAVS/IPS1. Interacts with ARRB1 and ARRB2. Interacts with NLRC5; prevents CHUK phosphorylation and kinase activity. Interacts with PIAS1; this interaction induces PIAS1 phosphorylation. Interacts with ZNF268 isoform 2; the interaction is further increased in a TNF-alpha-dependent manner. Interacts with FOXO3. Interacts with IFIT5; the interaction synergizes the recruitment of IKK to MAP3K7 and enhances IKK phosphorylation. Interacts with LRRC14. Interacts with SASH1. Directly interacts with DDX3X after the physiological activation of the TLR7 and TLR8 pathways; this interaction enhances CHUK autophosphorylation. In terms of assembly, (Microbial infection) Interacts with InlC of Listeria monocytogenes. In terms of processing, phosphorylated by MAP3K14/NIK, AKT and to a lesser extent by MEKK1, and dephosphorylated by PP2A. Autophosphorylated. Post-translationally, ubiquitinated by TRIM56 via 'Lys-63'-linked ubiquitination, promoting activation of CHUK/IKKA. (Microbial infection) Acetylation of Thr-179 by Yersinia YopJ prevents phosphorylation and activation, thus blocking the I-kappa-B signaling pathway. As to expression, widely expressed.

The protein resides in the cytoplasm. It is found in the nucleus. The catalysed reaction is L-seryl-[I-kappa-B protein] + ATP = O-phospho-L-seryl-[I-kappa-B protein] + ADP + H(+). Its activity is regulated as follows. Activated when phosphorylated and inactivated when dephosphorylated. Its function is as follows. Serine kinase that plays an essential role in the NF-kappa-B signaling pathway which is activated by multiple stimuli such as inflammatory cytokines, bacterial or viral products, DNA damages or other cellular stresses. Acts as a part of the canonical IKK complex in the conventional pathway of NF-kappa-B activation and phosphorylates inhibitors of NF-kappa-B on serine residues. These modifications allow polyubiquitination of the inhibitors and subsequent degradation by the proteasome. In turn, free NF-kappa-B is translocated into the nucleus and activates the transcription of hundreds of genes involved in immune response, growth control, or protection against apoptosis. Negatively regulates the pathway by phosphorylating the scaffold protein TAXBP1 and thus promoting the assembly of the A20/TNFAIP3 ubiquitin-editing complex (composed of A20/TNFAIP3, TAX1BP1, and the E3 ligases ITCH and RNF11). Therefore, CHUK plays a key role in the negative feedback of NF-kappa-B canonical signaling to limit inflammatory gene activation. As part of the non-canonical pathway of NF-kappa-B activation, the MAP3K14-activated CHUK/IKKA homodimer phosphorylates NFKB2/p100 associated with RelB, inducing its proteolytic processing to NFKB2/p52 and the formation of NF-kappa-B RelB-p52 complexes. In turn, these complexes regulate genes encoding molecules involved in B-cell survival and lymphoid organogenesis. Also participates in the negative feedback of the non-canonical NF-kappa-B signaling pathway by phosphorylating and destabilizing MAP3K14/NIK. Within the nucleus, phosphorylates CREBBP and consequently increases both its transcriptional and histone acetyltransferase activities. Modulates chromatin accessibility at NF-kappa-B-responsive promoters by phosphorylating histones H3 at 'Ser-10' that are subsequently acetylated at 'Lys-14' by CREBBP. Additionally, phosphorylates the CREBBP-interacting protein NCOA3. Also phosphorylates FOXO3 and may regulate this pro-apoptotic transcription factor. Phosphorylates RIPK1 at 'Ser-25' which represses its kinase activity and consequently prevents TNF-mediated RIPK1-dependent cell death. Phosphorylates AMBRA1 following mitophagy induction, promoting AMBRA1 interaction with ATG8 family proteins and its mitophagic activity. The chain is Inhibitor of nuclear factor kappa-B kinase subunit alpha (CHUK) from Homo sapiens (Human).